The primary structure comprises 399 residues: Methylmalonic aciduria type A homolog, mitochondrial (399 aa).

A mitochondrion-targeting transit peptide spans 1 to 15 (MVVRSLLRVSRLTSA). GTP is bound by residues 131-139 (GSPGVGKSS), Asp-274, and 310-312 (SIM).

This sequence belongs to the SIMIBI class G3E GTPase family. ArgK/MeaB subfamily.

It is found in the mitochondrion. Its function is as follows. May have GTPase activity. May also bind and hydrolyze ATP. May function as chaperone. Likely to have a role in propionyl-CoA and adenosylcobalamin metabolism. In Caenorhabditis elegans, this protein is Methylmalonic aciduria type A homolog, mitochondrial (mmaa-1).